The following is a 66-amino-acid chain: UPF0370 protein YpfN (66 aa).

Residues L4–I24 form a helical membrane-spanning segment. Residues K39–K66 form a disordered region. Basic and acidic residues predominate over residues L42–K51.

It belongs to the UPF0370 family.

The protein localises to the cell membrane. This chain is UPF0370 protein YpfN, found in Salmonella arizonae (strain ATCC BAA-731 / CDC346-86 / RSK2980).